The following is an 823-amino-acid chain: Protein phosphatase 1 regulatory subunit 29 (823 aa).

The first 22 residues, 1–22 (MLRLGLCAAALLCVCQPGAVRA), serve as a signal peptide directing secretion. At 23–397 (DCWLIEGDKG…APSTSTTTHY (375 aa)) the chain is on the extracellular side. N-linked (GlcNAc...) asparagine glycosylation is present at asparagine 54. LRR repeat units lie at residues 56 to 77 (TVHDLRLNENKLKAVLYSSLNR), 80 to 101 (NLTDLNLTKNEISYIEDGAFLG), 104 to 125 (SLQVLQLGYNRLSNLTEGMLRG), 128 to 149 (RLQFLFVQHNLIEVVTPTAFSE), and 152 to 173 (SLISIDLSSNRLSRLDGATFAS). Asparagine 80, asparagine 85, and asparagine 117 each carry an N-linked (GlcNAc...) asparagine glycan. One can recognise an LRRCT domain in the interval 185–247 (NPFNCECDLF…ITVLQAKCRN (63 aa)). Asparagine 205 and asparagine 247 each carry an N-linked (GlcNAc...) asparagine glycan. The disordered stretch occupies residues 249–294 (SMPARPVSHPTPYSTDAQREPDENSGFNPDEILSVEPPASSTTDAS). The region spanning 292-379 (DASAGPAIKL…FNHTCLTFTT (88 aa)) is the Fibronectin type-III domain. Residues 398–418 (IMTILGCLFGMVIVLGAVYYC) traverse the membrane as a helical segment. Residues 419-823 (LRKRRMQEEK…WKGVSAQQKL (405 aa)) lie on the Cytoplasmic side of the membrane. The tract at residues 590-624 (ASSAATPGALERPSFLSPPYKESSHHPLQRQLSAD) is disordered. Residues serine 622, serine 671, and serine 675 each carry the phosphoserine modification.

As to quaternary structure, interacts with PPP1CA.

It localises to the membrane. Its function is as follows. Inhibits phosphatase activity of protein phosphatase 1 (PP1) complexes. The polypeptide is Protein phosphatase 1 regulatory subunit 29 (Elfn2) (Mus musculus (Mouse)).